The sequence spans 441 residues: Chitinase-like protein Idgf3 (441 aa).

A signal peptide spans 1–23 (MTGSLWLSLALSLAVLAQFKVSA). One can recognise a GH18 domain in the interval 25 to 441 (PNLVCFYDSQ…MLRAIKYRLL (417 aa)). The cysteines at positions 29 and 56 are disulfide-linked. The N-linked (GlcNAc...) asparagine glycan is linked to Asn221. Residues 307–331 (KDSGDSGMPVVPSTQGPAPAGPQSK) form a disordered region. A disulfide bond links Cys342 and Cys425.

Belongs to the glycosyl hydrolase 18 family. IDGF subfamily. Post-translationally, glycosylated. Primarily expressed in yolk cells and fat body. In larvae, it is expressed in small and large salivary gland cells, and weakly expressed in imaginal disks. Less expressed than Idgf2 and Idgf4.

Its subcellular location is the secreted. Functionally, cooperates with insulin-like peptides to stimulate the proliferation, polarization and motility of imaginal disk cells. May act by stabilizing the binding of insulin-like peptides to its receptor through a simultaneous interaction with both molecules to form a multiprotein signaling complex. In Drosophila melanogaster (Fruit fly), this protein is Chitinase-like protein Idgf3 (Idgf3).